The following is a 143-amino-acid chain: Large ribosomal subunit protein uL11 (143 aa).

The protein belongs to the universal ribosomal protein uL11 family. As to quaternary structure, part of the ribosomal stalk of the 50S ribosomal subunit. Interacts with L10 and the large rRNA to form the base of the stalk. L10 forms an elongated spine to which L12 dimers bind in a sequential fashion forming a multimeric L10(L12)X complex. One or more lysine residues are methylated.

Functionally, forms part of the ribosomal stalk which helps the ribosome interact with GTP-bound translation factors. In Pseudomonas putida (strain ATCC 700007 / DSM 6899 / JCM 31910 / BCRC 17059 / LMG 24140 / F1), this protein is Large ribosomal subunit protein uL11.